We begin with the raw amino-acid sequence, 327 residues long: Putative ABC transporter ATP-binding protein MM_0887 (327 aa).

The tract at residues 1–44 is disordered; sequence MSKSTPLKSSIIRADLPEQAEGRTGPETGKDPEKTGNSEGKTDT. Residues 28-44 show a composition bias toward basic and acidic residues; the sequence is TGKDPEKTGNSEGKTDT. The ABC transporter domain occupies 47–282; the sequence is IEIKDLCHRY…PALLRKAHLR (236 aa). 81–88 is an ATP binding site; the sequence is GANGAGKS.

Belongs to the ABC transporter superfamily.

The protein localises to the cell membrane. Its function is as follows. Probably part of an ABC transporter complex. Responsible for energy coupling to the transport system. In Methanosarcina mazei (strain ATCC BAA-159 / DSM 3647 / Goe1 / Go1 / JCM 11833 / OCM 88) (Methanosarcina frisia), this protein is Putative ABC transporter ATP-binding protein MM_0887.